Here is a 148-residue protein sequence, read N- to C-terminus: Large ribosomal subunit protein uL13 (148 aa).

It belongs to the universal ribosomal protein uL13 family. In terms of assembly, part of the 50S ribosomal subunit.

In terms of biological role, this protein is one of the early assembly proteins of the 50S ribosomal subunit, although it is not seen to bind rRNA by itself. It is important during the early stages of 50S assembly. The polypeptide is Large ribosomal subunit protein uL13 (Ureaplasma parvum serovar 3 (strain ATCC 27815 / 27 / NCTC 11736)).